A 228-amino-acid chain; its full sequence is Ephrin-A5 (228 aa).

The signal sequence occupies residues 1-20 (MLHVEMLTLLFLVLWMCVFS). An Ephrin RBD domain is found at 29–162 (ADRYAVYWNS…KLKVFVRPTN (134 aa)). A glycan (N-linked (GlcNAc...) asparagine) is linked at Asn-37. Cystine bridges form between Cys-62-Cys-102 and Cys-90-Cys-151. A disordered region spans residues 186–205 (EPADDTVHESAEPSRGENAA). The span at 190 to 200 (DTVHESAEPSR) shows a compositional bias: basic and acidic residues. Residue Asn-203 is the site of GPI-anchor amidated asparagine attachment. The propeptide at 204–228 (AAQTPRIPSRLLAILLFLLAMLLTL) is removed in mature form.

It belongs to the ephrin family. Binds to the receptor tyrosine kinases EPHA2, EPHA3, EPHB1 and EPHB2. Interacts with EPHA8; activates EPHA8. Forms a ternary EFNA5-EPHA3-ADAM10 complex mediating EFNA5 extracellular domain shedding by ADAM10 which regulates the EFNA5-EPHA3 complex internalization and function. As to expression, expressed in brain, heart, placenta and lung.

The protein resides in the cell membrane. The protein localises to the membrane. It localises to the caveola. In terms of biological role, cell surface GPI-bound ligand for Eph receptors, a family of receptor tyrosine kinases which are crucial for migration, repulsion and adhesion during neuronal, vascular and epithelial development. Binds promiscuously Eph receptors residing on adjacent cells, leading to contact-dependent bidirectional signaling into neighboring cells. The signaling pathway downstream of the receptor is referred to as forward signaling while the signaling pathway downstream of the ephrin ligand is referred to as reverse signaling. Induces compartmentalized signaling within a caveolae-like membrane microdomain when bound to the extracellular domain of its cognate receptor. This signaling event requires the activity of the Fyn tyrosine kinase. Activates the EPHA3 receptor to regulate cell-cell adhesion and cytoskeletal organization. With the receptor EPHA2 may regulate lens fiber cells shape and interactions and be important for lens transparency maintenance. May function actively to stimulate axon fasciculation. The interaction of EFNA5 with EPHA5 also mediates communication between pancreatic islet cells to regulate glucose-stimulated insulin secretion. Cognate/functional ligand for EPHA7, their interaction regulates brain development modulating cell-cell adhesion and repulsion. The polypeptide is Ephrin-A5 (Efna5) (Rattus norvegicus (Rat)).